Reading from the N-terminus, the 493-residue chain is MLPYMDQVLRAFYQSTHWSTQNSYEDITATSRTLLDFRIPSAIHLQISNKSTPNTFNSLDFSTRSRINGSLSYLYSDAQQLEKFMRNSTDIPLQDATETYRQLQPNLNYSVSSGNTLSSDNTTVDNDKKLLHDSKFVKKSLYYGRMYYPSSDLEAMIIKRLSPQTQFMLKGVSSFKESLNVLTCYFQRDSHRNLQEWIFSTSDLLCGYRVLHNFLTTPSKFNTSLYNNSSLSLGAEFWLGLVSLSPGCSTTLRYYTHSTNTGRPLTLTLSWNPLFGHISSTYSAKTGTNSTFCAKYDFNLYSIESNLSFGCEFWQKKHHLLETNKNNNDKLEPISDELVDINPNSRATKLLHENVPDLNSAVNDIPSTLDIPVHKQKLLNDLTYAFSSSLRKIDEERSTIEKFDNKINSSIFTSVWKLSTSLRDKTLKLLWEGKWRGFLISAGTELVFTRGFQESLSDDEKNDNAISISATDTENGNIPVFPAKFGIQFQYST.

It belongs to the MDM10 family. Component of the ER-mitochondria encounter structure (ERMES) or MDM complex, composed of MMM1, MDM10, MDM12 and MDM34. Associates with the mitochondrial outer membrane sorting assembly machinery SAM(core) complex, which consists of SAM35, SAM37 and SAM50, to form a SAM(holo) complex.

The protein localises to the mitochondrion outer membrane. In terms of biological role, component of the ERMES/MDM complex, which serves as a molecular tether to connect the endoplasmic reticulum and mitochondria. Components of this complex are involved in the control of mitochondrial shape and protein biogenesis and may function in phospholipid exchange. MDM10 is involved in the late assembly steps of the general translocase of the mitochondrial outer membrane (TOM complex). Functions in the TOM40-specific route of the assembly of outer membrane beta-barrel proteins, including the association of TOM40 with the receptor TOM22 and small TOM proteins. Can associate with the SAM(core) complex as well as the MDM12-MMM1 complex, both involved in late steps of the major beta-barrel assembly pathway, that is responsible for biogenesis of all outer membrane beta-barrel proteins. May act as a switch that shuttles between both complexes and channels precursor proteins into the TOM40-specific pathway. Plays a role in mitochondrial morphology and in the inheritance of mitochondria. The sequence is that of Mitochondrial distribution and morphology protein 10 from Saccharomyces cerevisiae (strain YJM789) (Baker's yeast).